A 178-amino-acid polypeptide reads, in one-letter code: ATP-dependent protease subunit HslV (178 aa).

Thr-7 is a catalytic residue. Residues Gly-162, Cys-165, and Thr-168 each coordinate Na(+).

The protein belongs to the peptidase T1B family. HslV subfamily. In terms of assembly, a double ring-shaped homohexamer of HslV is capped on each side by a ring-shaped HslU homohexamer. The assembly of the HslU/HslV complex is dependent on binding of ATP.

The protein resides in the cytoplasm. The enzyme catalyses ATP-dependent cleavage of peptide bonds with broad specificity.. Its activity is regulated as follows. Allosterically activated by HslU binding. In terms of biological role, protease subunit of a proteasome-like degradation complex believed to be a general protein degrading machinery. The chain is ATP-dependent protease subunit HslV from Burkholderia lata (strain ATCC 17760 / DSM 23089 / LMG 22485 / NCIMB 9086 / R18194 / 383).